The chain runs to 882 residues: Valine--tRNA ligase (882 aa).

The 'HIGH' region motif lies at Pro50–His60. The 'KMSKS' region signature appears at Lys526–Ser530. Lys529 contacts ATP. Residues Leu810–Glu881 are a coiled coil.

It belongs to the class-I aminoacyl-tRNA synthetase family. ValS type 1 subfamily. Monomer.

Its subcellular location is the cytoplasm. The catalysed reaction is tRNA(Val) + L-valine + ATP = L-valyl-tRNA(Val) + AMP + diphosphate. In terms of biological role, catalyzes the attachment of valine to tRNA(Val). As ValRS can inadvertently accommodate and process structurally similar amino acids such as threonine, to avoid such errors, it has a 'posttransfer' editing activity that hydrolyzes mischarged Thr-tRNA(Val) in a tRNA-dependent manner. The sequence is that of Valine--tRNA ligase from Listeria innocua serovar 6a (strain ATCC BAA-680 / CLIP 11262).